We begin with the raw amino-acid sequence, 634 residues long: MSKVIGIDLGTTNSCVSVYERGESKIIPNKEGKNTTPSVVAFTDKGEILVGDSAKRQAVTNPEKTIYSIKRIMGLMMNEKNAQEAKKRLPYKIVDRNGACAVEIAGKVYTPQEISAKVLMKLKEDAESYLGEKVVDAVITVPAYFNDSQRKATKEAGTIAGLNVLRIINEPTAAALAYGLDKKESERIVVYDLGGGTFDVTVLETGDSVVEVLATGGNAFLGGDDFDNKLIDYLLSEFKNESGIDIKGDVMAMQRLKEAAENAKKELSSAMETTVNLPFITADQTGPKHLMKTISRAKFEGMIDNLVGETISTLNSVVSDAGLKMSDIKEVVMVGGSTRVPLVCEEVKKAFGKDLNKSVNPDEVVAVGAAVQGAVIKGDVKDVLLLDVTPLSLGIETLGGIMTKLIDKGTTIPTKKSQVFSTAEDNQSAVTINVLQGEREFARDNKSLGNFNLDGIMPAPRGVPQIEVEFDIDANGILTVSAKDKATGKATDIKITGSSGLSDEEIDKMVKDAELHKEDDKKRKESVDARNGADAIAHQTEKTLNEMGEKIPADLRAKIEAALNDLKAVLKDENATKEQIDAKVSALSKTAEEMYKAASAGKNAGGTAGGNGNAGSNGNSGAKKDDDVIDAEVE.

A Phosphothreonine; by autocatalysis modification is found at Thr197. Positions 515-528 (LHKEDDKKRKESVD) are enriched in basic and acidic residues. 2 disordered regions span residues 515 to 536 (LHKEDDKKRKESVDARNGADAI) and 595 to 634 (YKAASAGKNAGGTAGGNGNAGSNGNSGAKKDDDVIDAEVE). Gly residues predominate over residues 603 to 615 (NAGGTAGGNGNAG).

It belongs to the heat shock protein 70 family.

Acts as a chaperone. This is Chaperone protein DnaK from Campylobacter hominis (strain ATCC BAA-381 / DSM 21671 / CCUG 45161 / LMG 19568 / NCTC 13146 / CH001A).